The chain runs to 390 residues: Flagellar P-ring protein (390 aa).

An N-terminal signal peptide occupies residues 1–36 (MFFSRKIRSLLLTPKRRWSLILTLCLIFTGINFSTS).

This sequence belongs to the FlgI family. As to quaternary structure, the basal body constitutes a major portion of the flagellar organelle and consists of four rings (L,P,S, and M) mounted on a central rod.

It localises to the periplasm. The protein resides in the bacterial flagellum basal body. Functionally, assembles around the rod to form the L-ring and probably protects the motor/basal body from shearing forces during rotation. In Desulfotalea psychrophila (strain LSv54 / DSM 12343), this protein is Flagellar P-ring protein.